Here is a 105-residue protein sequence, read N- to C-terminus: Phosphoribosyl-ATP pyrophosphatase (105 aa).

The protein belongs to the PRA-PH family.

The protein resides in the cytoplasm. The catalysed reaction is 1-(5-phospho-beta-D-ribosyl)-ATP + H2O = 1-(5-phospho-beta-D-ribosyl)-5'-AMP + diphosphate + H(+). The protein operates within amino-acid biosynthesis; L-histidine biosynthesis; L-histidine from 5-phospho-alpha-D-ribose 1-diphosphate: step 2/9. The chain is Phosphoribosyl-ATP pyrophosphatase from Ruthia magnifica subsp. Calyptogena magnifica.